A 394-amino-acid chain; its full sequence is Chorismate synthase (394 aa).

The NADP(+) site is built by Arg40 and Arg46. FMN contacts are provided by residues 135 to 137 (RAS) and 255 to 256 (QA). Residues 270-291 (RRRGSGAHDEIEPAGAGSRRVR) form a disordered region. FMN-binding positions include Gly302, 317–321 (KPISS), and Arg343.

It belongs to the chorismate synthase family. Homotetramer. Requires FMNH2 as cofactor.

The enzyme catalyses 5-O-(1-carboxyvinyl)-3-phosphoshikimate = chorismate + phosphate. It functions in the pathway metabolic intermediate biosynthesis; chorismate biosynthesis; chorismate from D-erythrose 4-phosphate and phosphoenolpyruvate: step 7/7. Catalyzes the anti-1,4-elimination of the C-3 phosphate and the C-6 proR hydrogen from 5-enolpyruvylshikimate-3-phosphate (EPSP) to yield chorismate, which is the branch point compound that serves as the starting substrate for the three terminal pathways of aromatic amino acid biosynthesis. This reaction introduces a second double bond into the aromatic ring system. This Frankia casuarinae (strain DSM 45818 / CECT 9043 / HFP020203 / CcI3) protein is Chorismate synthase.